The sequence spans 320 residues: Cytochrome f (320 aa).

An N-terminal signal peptide occupies residues 1–35; sequence MENRKTFSWLKEQMIRSISVSIMIYVITRTSISNA. Positions 36, 56, 59, and 60 each coordinate heme. Residues 286 to 305 form a helical membrane-spanning segment; that stretch reads VQGLLFFFASVILAQVFLVL.

The protein belongs to the cytochrome f family. In terms of assembly, the 4 large subunits of the cytochrome b6-f complex are cytochrome b6, subunit IV (17 kDa polypeptide, petD), cytochrome f and the Rieske protein, while the 4 small subunits are PetG, PetL, PetM and PetN. The complex functions as a dimer. It depends on heme as a cofactor.

The protein resides in the plastid. It is found in the chloroplast thylakoid membrane. In terms of biological role, component of the cytochrome b6-f complex, which mediates electron transfer between photosystem II (PSII) and photosystem I (PSI), cyclic electron flow around PSI, and state transitions. In Zea mays (Maize), this protein is Cytochrome f (petA).